The following is a 334-amino-acid chain: Protein-methionine-sulfoxide reductase catalytic subunit MsrP (334 aa).

The segment at residues 1 to 44 (MKKNQFLKESDVTAESVFFMKRRQVLKALGISAAALSLPHAAHA) is a signal peptide (tat-type signal). Mo-molybdopterin is bound by residues Asn88, 91–92 (YE), Cys146, Thr181, Asn233, Arg238, and 249–251 (GIK).

Belongs to the MsrP family. As to quaternary structure, heterodimer of a catalytic subunit (MsrP) and a heme-binding subunit (MsrQ). Mo-molybdopterin is required as a cofactor. Predicted to be exported by the Tat system. The position of the signal peptide cleavage has not been experimentally proven.

The protein localises to the periplasm. The catalysed reaction is L-methionyl-[protein] + a quinone + H2O = L-methionyl-(S)-S-oxide-[protein] + a quinol. It carries out the reaction L-methionyl-[protein] + a quinone + H2O = L-methionyl-(R)-S-oxide-[protein] + a quinol. In terms of biological role, part of the MsrPQ system that repairs oxidized periplasmic proteins containing methionine sulfoxide residues (Met-O), using respiratory chain electrons. Thus protects these proteins from oxidative-stress damage caused by reactive species of oxygen and chlorine generated by the host defense mechanisms. MsrPQ is essential for the maintenance of envelope integrity under bleach stress, rescuing a wide series of structurally unrelated periplasmic proteins from methionine oxidation, including the primary periplasmic chaperone SurA and the lipoprotein Pal. The catalytic subunit MsrP is non-stereospecific, being able to reduce both (R-) and (S-) diastereoisomers of methionine sulfoxide. In Escherichia coli O9:H4 (strain HS), this protein is Protein-methionine-sulfoxide reductase catalytic subunit MsrP.